The chain runs to 165 residues: MDYSTSDLCDHFADVVDVLEPMFINFGGRHSFGGRIKTVKCFENNELIRELLSQDGTDLVLLIDGGGSTRRALIDIELAELALENNWQGIIVYGAVRHVDEIEELDLGIQAIASIPVAADSQGAGEDGIGVNFAGVSFFDDDFIYADSTGIVLSAEELELEIVEI.

This sequence belongs to the RraA family. In terms of assembly, homotrimer. Binds to both RNA-binding sites in the C-terminal region of Rne and to RhlB.

It localises to the cytoplasm. In terms of biological role, globally modulates RNA abundance by binding to RNase E (Rne) and regulating its endonucleolytic activity. Can modulate Rne action in a substrate-dependent manner by altering the composition of the degradosome. Modulates RNA-binding and helicase activities of the degradosome. This chain is Regulator of ribonuclease activity A, found in Pseudoalteromonas translucida (strain TAC 125).